The following is an 80-amino-acid chain: Exodeoxyribonuclease 7 small subunit (80 aa).

Belongs to the XseB family. Heterooligomer composed of large and small subunits.

It is found in the cytoplasm. The enzyme catalyses Exonucleolytic cleavage in either 5'- to 3'- or 3'- to 5'-direction to yield nucleoside 5'-phosphates.. Functionally, bidirectionally degrades single-stranded DNA into large acid-insoluble oligonucleotides, which are then degraded further into small acid-soluble oligonucleotides. This chain is Exodeoxyribonuclease 7 small subunit, found in Pseudomonas putida (strain GB-1).